We begin with the raw amino-acid sequence, 256 residues long: Pro-thyrotropin-releasing hormone (256 aa).

Positions 1–24 (MQGPWLMMALALIFVLTGIPKSCA) are cleaved as a signal peptide. 2 disordered regions span residues 76–128 (RQHP…EGDS) and 151–215 (VKRQ…HPCG). Proline amide occurs at positions 79, 111, 156, and 174. A compositionally biased stretch (basic residues) spans 104 to 113 (RPHKRQHPGR). Over residues 177–188 (RFIDPELQRSWE) the composition is skewed to basic and acidic residues. P205 is modified (proline amide).

The protein belongs to the TRH family. As to expression, specifically expressed in hypothalamus and testis.

It localises to the secreted. In terms of biological role, functions as a regulator of the biosynthesis of TSH in the anterior pituitary gland and as a neurotransmitter/ neuromodulator in the central and peripheral nervous systems. The sequence is that of Pro-thyrotropin-releasing hormone (Trh) from Mus musculus (Mouse).